The primary structure comprises 87 residues: Prohibitin 1 (87 aa).

Residue Thr8 is modified to Phosphothreonine. The residue at position 62 (Lys62) is an N6-acetyllysine. Tyr83 is modified (phosphotyrosine).

This sequence belongs to the prohibitin family. As to quaternary structure, the mitochondrial prohibitin complex consists of two subunits (PHB1 and PHB2), assembled into a membrane-associated ring-shaped supercomplex of approximately 1 mDa. Interacts with STOML2. Interacts with MAP1LC3B (membrane-bound form LC3-II); the interaction requires PHB2 and takes place upon Parkin-mediated mitochondrial damage. Interacts with STAT3 (unphosphorylated or phosphorylated at 'Ser-727'). Interacts with CLPB. Interacts with CD86 (via cytoplasmic domain); the interactions increases after priming with CD40.

Its subcellular location is the mitochondrion inner membrane. It localises to the nucleus. The protein localises to the cytoplasm. It is found in the cell membrane. Protein with pleiotropic attributes mediated in a cell-compartment- and tissue-specific manner, which include the plasma membrane-associated cell signaling functions, mitochondrial chaperone, and transcriptional co-regulator of transcription factors in the nucleus. Plays a role in adipose tissue and glucose homeostasis in a sex-specific manner. Contributes to pulmonary vascular remodeling by accelerating proliferation of pulmonary arterial smooth muscle cells. In terms of biological role, in the mitochondria, together with PHB2, forms large ring complexes (prohibitin complexes) in the inner mitochondrial membrane (IMM) and functions as a chaperone protein that stabilizes mitochondrial respiratory enzymes and maintains mitochondrial integrity in the IMM, which is required for mitochondrial morphogenesis, neuronal survival, and normal lifespan. The prohibitin complex, with DNAJC19, regulates cardiolipin remodeling and the protein turnover of OMA1 in a cardiolipin-binding manner. Regulates mitochondrial respiration activity playing a role in cellular aging. The prohibitin complex plays a role of mitophagy receptor involved in targeting mitochondria for autophagic degradation. Involved in mitochondrial-mediated antiviral innate immunity, activates RIG-I-mediated signal transduction and production of IFNB1 and proinflammatory cytokine IL6. Its function is as follows. In the nucleus, acts as a transcription coregulator, enhances promoter binding by TP53, a transcription factor it activates, but reduces the promoter binding by E2F1, a transcription factor it represses. Interacts with STAT3 to affect IL17 secretion in T-helper Th17 cells. Functionally, in the plasma membrane, cooperates with CD86 to mediate CD86-signaling in B lymphocytes that regulates the level of IgG1 produced through the activation of distal signaling intermediates. Upon CD40 engagement, required to activate NF-kappa-B signaling pathway via phospholipase C and protein kinase C activation. This Mesocricetus auratus (Golden hamster) protein is Prohibitin 1 (PHB1).